The sequence spans 431 residues: Tol-Pal system protein TolB (431 aa).

An N-terminal signal peptide occupies residues 1–26 (MSLMTKLGFRALVASCLIAAGGAANA). Residues 411–431 (PQILSVQGGSVREPSWGPFMQ) are disordered.

It belongs to the TolB family. The Tol-Pal system is composed of five core proteins: the inner membrane proteins TolA, TolQ and TolR, the periplasmic protein TolB and the outer membrane protein Pal. They form a network linking the inner and outer membranes and the peptidoglycan layer.

It localises to the periplasm. Its function is as follows. Part of the Tol-Pal system, which plays a role in outer membrane invagination during cell division and is important for maintaining outer membrane integrity. In Burkholderia vietnamiensis (strain G4 / LMG 22486) (Burkholderia cepacia (strain R1808)), this protein is Tol-Pal system protein TolB.